A 284-amino-acid chain; its full sequence is Diaminopimelate epimerase (284 aa).

The substrate site is built by Asn21, Gln54, and Asn74. Cys83 serves as the catalytic Proton donor. Residues 84 to 85 (GN), Asn167, Asn200, and 218 to 219 (ER) contribute to the substrate site. The Proton acceptor role is filled by Cys227. 228-229 (GS) contacts substrate.

The protein belongs to the diaminopimelate epimerase family. As to quaternary structure, homodimer.

The protein resides in the cytoplasm. It catalyses the reaction (2S,6S)-2,6-diaminopimelate = meso-2,6-diaminopimelate. It functions in the pathway amino-acid biosynthesis; L-lysine biosynthesis via DAP pathway; DL-2,6-diaminopimelate from LL-2,6-diaminopimelate: step 1/1. Catalyzes the stereoinversion of LL-2,6-diaminopimelate (L,L-DAP) to meso-diaminopimelate (meso-DAP), a precursor of L-lysine and an essential component of the bacterial peptidoglycan. In Buchnera aphidicola subsp. Acyrthosiphon pisum (strain 5A), this protein is Diaminopimelate epimerase.